Reading from the N-terminus, the 542-residue chain is ATP synthase subunit alpha (542 aa).

173–180 provides a ligand contact to ATP; the sequence is GDRQTGKT. The interval 518–542 is disordered; that stretch reads PLVEKKPDEKHTTPVEQEKIVAGEK. A compositionally biased stretch (basic and acidic residues) spans 519-542; the sequence is LVEKKPDEKHTTPVEQEKIVAGEK.

It belongs to the ATPase alpha/beta chains family. As to quaternary structure, F-type ATPases have 2 components, CF(1) - the catalytic core - and CF(0) - the membrane proton channel. CF(1) has five subunits: alpha(3), beta(3), gamma(1), delta(1), epsilon(1). CF(0) has three main subunits: a(1), b(2) and c(9-12). The alpha and beta chains form an alternating ring which encloses part of the gamma chain. CF(1) is attached to CF(0) by a central stalk formed by the gamma and epsilon chains, while a peripheral stalk is formed by the delta and b chains.

Its subcellular location is the cell membrane. It carries out the reaction ATP + H2O + 4 H(+)(in) = ADP + phosphate + 5 H(+)(out). In terms of biological role, produces ATP from ADP in the presence of a proton gradient across the membrane. The alpha chain is a regulatory subunit. This chain is ATP synthase subunit alpha, found in Bifidobacterium adolescentis (strain ATCC 15703 / DSM 20083 / NCTC 11814 / E194a).